The sequence spans 516 residues: Probable cytochrome P450 9f2 (516 aa).

A heme-binding site is contributed by Cys-460.

The protein belongs to the cytochrome P450 family. Requires heme as cofactor.

Its subcellular location is the endoplasmic reticulum membrane. The protein resides in the microsome membrane. May be involved in the metabolism of insect hormones and in the breakdown of synthetic insecticides. The chain is Probable cytochrome P450 9f2 (Cyp9f2) from Drosophila melanogaster (Fruit fly).